The following is a 1088-amino-acid chain: DNA mismatch repair protein MutS (1088 aa).

Residues 498–579 (PLDGITPPDD…SFEMPSLHGH (82 aa)) form a disordered region. Residues 537–546 (DLFDEEEEQE) are compositionally biased toward acidic residues. Residue 816–823 (GPNMSGKS) participates in ATP binding. The segment at 1000–1048 (LERRAPRSTPQPAPERTEERPAAGRPTARSHSAARGDPPRAPDGQLSLF) is disordered.

This sequence belongs to the DNA mismatch repair MutS family.

Functionally, this protein is involved in the repair of mismatches in DNA. It is possible that it carries out the mismatch recognition step. This protein has a weak ATPase activity. In Roseiflexus castenholzii (strain DSM 13941 / HLO8), this protein is DNA mismatch repair protein MutS.